A 440-amino-acid chain; its full sequence is Thymidine phosphorylase (440 aa).

Belongs to the thymidine/pyrimidine-nucleoside phosphorylase family. In terms of assembly, homodimer.

The enzyme catalyses thymidine + phosphate = 2-deoxy-alpha-D-ribose 1-phosphate + thymine. It functions in the pathway pyrimidine metabolism; dTMP biosynthesis via salvage pathway; dTMP from thymine: step 1/2. The enzymes which catalyze the reversible phosphorolysis of pyrimidine nucleosides are involved in the degradation of these compounds and in their utilization as carbon and energy sources, or in the rescue of pyrimidine bases for nucleotide synthesis. The polypeptide is Thymidine phosphorylase (Proteus mirabilis (strain HI4320)).